Consider the following 295-residue polypeptide: Pyridoxal 5'-phosphate synthase subunit PdxS (295 aa).

D25 lines the D-ribose 5-phosphate pocket. K82 (schiff-base intermediate with D-ribose 5-phosphate) is an active-site residue. D-ribose 5-phosphate is bound at residue G154. R166 lines the D-glyceraldehyde 3-phosphate pocket. D-ribose 5-phosphate contacts are provided by residues G215 and 236–237 (GS).

It belongs to the PdxS/SNZ family. In terms of assembly, in the presence of PdxT, forms a dodecamer of heterodimers.

The catalysed reaction is aldehydo-D-ribose 5-phosphate + D-glyceraldehyde 3-phosphate + L-glutamine = pyridoxal 5'-phosphate + L-glutamate + phosphate + 3 H2O + H(+). The protein operates within cofactor biosynthesis; pyridoxal 5'-phosphate biosynthesis. Functionally, catalyzes the formation of pyridoxal 5'-phosphate from ribose 5-phosphate (RBP), glyceraldehyde 3-phosphate (G3P) and ammonia. The ammonia is provided by the PdxT subunit. Can also use ribulose 5-phosphate and dihydroxyacetone phosphate as substrates, resulting from enzyme-catalyzed isomerization of RBP and G3P, respectively. The chain is Pyridoxal 5'-phosphate synthase subunit PdxS from Staphylococcus saprophyticus subsp. saprophyticus (strain ATCC 15305 / DSM 20229 / NCIMB 8711 / NCTC 7292 / S-41).